The sequence spans 1072 residues: DNA-directed RNA polymerase subunit beta (1072 aa).

The protein belongs to the RNA polymerase beta chain family. In plastids the minimal PEP RNA polymerase catalytic core is composed of four subunits: alpha, beta, beta', and beta''. When a (nuclear-encoded) sigma factor is associated with the core the holoenzyme is formed, which can initiate transcription.

It localises to the plastid. Its subcellular location is the chloroplast. The enzyme catalyses RNA(n) + a ribonucleoside 5'-triphosphate = RNA(n+1) + diphosphate. Its function is as follows. DNA-dependent RNA polymerase catalyzes the transcription of DNA into RNA using the four ribonucleoside triphosphates as substrates. The chain is DNA-directed RNA polymerase subunit beta from Oenothera elata subsp. hookeri (Hooker's evening primrose).